Reading from the N-terminus, the 368-residue chain is mRNA export factor (368 aa).

Residues 1–37 (MSLFSTPGGFGTGGGSMFGSTATDNHNPMKDIEVTSP) are disordered. A compositionally biased stretch (gly residues) spans 8-17 (GGFGTGGGSM). WD repeat units follow at residues 37–79 (PPDD…QTIP), 84–114 (MHTG…KMWD), 125–157 (QHDA…KFWD), 168–206 (QLPE…EFRR), 215–255 (HRCV…KDNF), 271–301 (QDIY…SFWD), and 310–346 (TSEQ…EFYN).

This sequence belongs to the WD repeat rae1 family.

The protein localises to the cytoplasm. The protein resides in the nucleus. Its subcellular location is the cytoskeleton. It is found in the spindle pole. In terms of biological role, plays a role in mitotic bipolar spindle formation. Binds mRNA. May function in nucleocytoplasmic transport and in directly or indirectly attaching cytoplasmic mRNPs to the cytoskeleton. The chain is mRNA export factor (rae1) from Xenopus tropicalis (Western clawed frog).